The following is a 177-amino-acid chain: Large ribosomal subunit protein uL6 (177 aa).

The protein belongs to the universal ribosomal protein uL6 family. As to quaternary structure, part of the 50S ribosomal subunit.

This protein binds to the 23S rRNA, and is important in its secondary structure. It is located near the subunit interface in the base of the L7/L12 stalk, and near the tRNA binding site of the peptidyltransferase center. The polypeptide is Large ribosomal subunit protein uL6 (Shewanella frigidimarina (strain NCIMB 400)).